Here is a 232-residue protein sequence, read N- to C-terminus: MARRPDLKTGPERLAALVRTTVPPMHPAGLPFVGASLAVALAGRKSRWLRNAGVASAAANAAFFRHPPRTPPTRPGVVVAPADGLICLIEDELPPAELELPAVPLPRISIFLSLFDAHVQRAPLAGEVVAVEHRPGLFGSAELAAASADNERNSVVIRSPEGAEVIAVQIAGLLARRIVCNVKSGDKVGLGDTYGLIRYGSRLDTYLPAGSDVLVEVGQRAVAGETVLAELP.

Ser-201 functions as the Schiff-base intermediate with substrate; via pyruvic acid in the catalytic mechanism. Ser-201 is subject to Pyruvic acid (Ser); by autocatalysis.

The protein belongs to the phosphatidylserine decarboxylase family. PSD-A subfamily. As to quaternary structure, heterodimer of a large membrane-associated beta subunit and a small pyruvoyl-containing alpha subunit. The cofactor is pyruvate. In terms of processing, is synthesized initially as an inactive proenzyme. Formation of the active enzyme involves a self-maturation process in which the active site pyruvoyl group is generated from an internal serine residue via an autocatalytic post-translational modification. Two non-identical subunits are generated from the proenzyme in this reaction, and the pyruvate is formed at the N-terminus of the alpha chain, which is derived from the carboxyl end of the proenzyme. The post-translation cleavage follows an unusual pathway, termed non-hydrolytic serinolysis, in which the side chain hydroxyl group of the serine supplies its oxygen atom to form the C-terminus of the beta chain, while the remainder of the serine residue undergoes an oxidative deamination to produce ammonia and the pyruvoyl prosthetic group on the alpha chain.

It localises to the cell membrane. It carries out the reaction a 1,2-diacyl-sn-glycero-3-phospho-L-serine + H(+) = a 1,2-diacyl-sn-glycero-3-phosphoethanolamine + CO2. It functions in the pathway phospholipid metabolism; phosphatidylethanolamine biosynthesis; phosphatidylethanolamine from CDP-diacylglycerol: step 2/2. In terms of biological role, catalyzes the formation of phosphatidylethanolamine (PtdEtn) from phosphatidylserine (PtdSer). The polypeptide is Phosphatidylserine decarboxylase proenzyme (Mycolicibacterium gilvum (strain PYR-GCK) (Mycobacterium gilvum (strain PYR-GCK))).